The chain runs to 188 residues: Peptidyl-tRNA hydrolase (188 aa).

Residue F15 participates in tRNA binding. The Proton acceptor role is filled by H20. TRNA is bound by residues Y64, N66, and N112.

This sequence belongs to the PTH family. As to quaternary structure, monomer.

It is found in the cytoplasm. The enzyme catalyses an N-acyl-L-alpha-aminoacyl-tRNA + H2O = an N-acyl-L-amino acid + a tRNA + H(+). In terms of biological role, hydrolyzes ribosome-free peptidyl-tRNAs (with 1 or more amino acids incorporated), which drop off the ribosome during protein synthesis, or as a result of ribosome stalling. Its function is as follows. Catalyzes the release of premature peptidyl moieties from peptidyl-tRNA molecules trapped in stalled 50S ribosomal subunits, and thus maintains levels of free tRNAs and 50S ribosomes. The chain is Peptidyl-tRNA hydrolase from Borreliella burgdorferi (strain ATCC 35210 / DSM 4680 / CIP 102532 / B31) (Borrelia burgdorferi).